Here is a 408-residue protein sequence, read N- to C-terminus: Multifunctional CCA protein (408 aa).

The ATP site is built by Gly8 and Arg11. CTP is bound by residues Gly8 and Arg11. Mg(2+) is bound by residues Asp21 and Asp23. Positions 91, 137, and 140 each coordinate ATP. CTP contacts are provided by Arg91, Arg137, and Arg140. Positions 228–329 constitute an HD domain; that stretch reads SGVHTLMVLE…VKLFDKADFW (102 aa).

The protein belongs to the tRNA nucleotidyltransferase/poly(A) polymerase family. Bacterial CCA-adding enzyme type 1 subfamily. As to quaternary structure, monomer. Can also form homodimers and oligomers. Mg(2+) serves as cofactor. It depends on Ni(2+) as a cofactor.

The catalysed reaction is a tRNA precursor + 2 CTP + ATP = a tRNA with a 3' CCA end + 3 diphosphate. It catalyses the reaction a tRNA with a 3' CCA end + 2 CTP + ATP = a tRNA with a 3' CCACCA end + 3 diphosphate. Catalyzes the addition and repair of the essential 3'-terminal CCA sequence in tRNAs without using a nucleic acid template. Adds these three nucleotides in the order of C, C, and A to the tRNA nucleotide-73, using CTP and ATP as substrates and producing inorganic pyrophosphate. tRNA 3'-terminal CCA addition is required both for tRNA processing and repair. Also involved in tRNA surveillance by mediating tandem CCA addition to generate a CCACCA at the 3' terminus of unstable tRNAs. While stable tRNAs receive only 3'-terminal CCA, unstable tRNAs are marked with CCACCA and rapidly degraded. In Shewanella piezotolerans (strain WP3 / JCM 13877), this protein is Multifunctional CCA protein.